The chain runs to 358 residues: Ribosomal RNA large subunit methyltransferase M (358 aa).

S-adenosyl-L-methionine contacts are provided by residues S187, C220–G223, D239, D259, and D276. Residue K305 is the Proton acceptor of the active site.

This sequence belongs to the class I-like SAM-binding methyltransferase superfamily. RNA methyltransferase RlmE family. RlmM subfamily. In terms of assembly, monomer.

The protein resides in the cytoplasm. The enzyme catalyses cytidine(2498) in 23S rRNA + S-adenosyl-L-methionine = 2'-O-methylcytidine(2498) in 23S rRNA + S-adenosyl-L-homocysteine + H(+). In terms of biological role, catalyzes the 2'-O-methylation at nucleotide C2498 in 23S rRNA. The polypeptide is Ribosomal RNA large subunit methyltransferase M (Shewanella woodyi (strain ATCC 51908 / MS32)).